The primary structure comprises 334 residues: Holliday junction branch migration complex subunit RuvB (334 aa).

The large ATPase domain (RuvB-L) stretch occupies residues 1–182 (MNERMVDQSM…FGVHLRLEYY (182 aa)). Residues Leu21, Arg22, Gly63, Lys66, Thr67, Thr68, 129-131 (EDF), Arg172, Tyr182, and Arg219 contribute to the ATP site. Thr67 contacts Mg(2+). The segment at 183–253 (NESDLKEIII…TTKHALGLLQ (71 aa)) is small ATPAse domain (RuvB-S). The interval 256-334 (QHGLDYIDHK…HFAKSNEERE (79 aa)) is head domain (RuvB-H). Residues Arg292, Arg311, and Arg316 each contribute to the DNA site.

The protein belongs to the RuvB family. Homohexamer. Forms an RuvA(8)-RuvB(12)-Holliday junction (HJ) complex. HJ DNA is sandwiched between 2 RuvA tetramers; dsDNA enters through RuvA and exits via RuvB. An RuvB hexamer assembles on each DNA strand where it exits the tetramer. Each RuvB hexamer is contacted by two RuvA subunits (via domain III) on 2 adjacent RuvB subunits; this complex drives branch migration. In the full resolvosome a probable DNA-RuvA(4)-RuvB(12)-RuvC(2) complex forms which resolves the HJ.

The protein localises to the cytoplasm. The enzyme catalyses ATP + H2O = ADP + phosphate + H(+). The RuvA-RuvB-RuvC complex processes Holliday junction (HJ) DNA during genetic recombination and DNA repair, while the RuvA-RuvB complex plays an important role in the rescue of blocked DNA replication forks via replication fork reversal (RFR). RuvA specifically binds to HJ cruciform DNA, conferring on it an open structure. The RuvB hexamer acts as an ATP-dependent pump, pulling dsDNA into and through the RuvAB complex. RuvB forms 2 homohexamers on either side of HJ DNA bound by 1 or 2 RuvA tetramers; 4 subunits per hexamer contact DNA at a time. Coordinated motions by a converter formed by DNA-disengaged RuvB subunits stimulates ATP hydrolysis and nucleotide exchange. Immobilization of the converter enables RuvB to convert the ATP-contained energy into a lever motion, pulling 2 nucleotides of DNA out of the RuvA tetramer per ATP hydrolyzed, thus driving DNA branch migration. The RuvB motors rotate together with the DNA substrate, which together with the progressing nucleotide cycle form the mechanistic basis for DNA recombination by continuous HJ branch migration. Branch migration allows RuvC to scan DNA until it finds its consensus sequence, where it cleaves and resolves cruciform DNA. The chain is Holliday junction branch migration complex subunit RuvB from Staphylococcus aureus (strain bovine RF122 / ET3-1).